The primary structure comprises 110 residues: Large ribosomal subunit protein uL22 (110 aa).

It belongs to the universal ribosomal protein uL22 family. As to quaternary structure, part of the 50S ribosomal subunit.

This protein binds specifically to 23S rRNA; its binding is stimulated by other ribosomal proteins, e.g. L4, L17, and L20. It is important during the early stages of 50S assembly. It makes multiple contacts with different domains of the 23S rRNA in the assembled 50S subunit and ribosome. Its function is as follows. The globular domain of the protein is located near the polypeptide exit tunnel on the outside of the subunit, while an extended beta-hairpin is found that lines the wall of the exit tunnel in the center of the 70S ribosome. The polypeptide is Large ribosomal subunit protein uL22 (Vesicomyosocius okutanii subsp. Calyptogena okutanii (strain HA)).